The sequence spans 525 residues: 2-isopropylmalate synthase (525 aa).

One can recognise a Pyruvate carboxyltransferase domain in the interval Val12–Thr274. The Mn(2+) site is built by Asp21, His209, His211, and Asn245. The interval Lys398–Ser525 is regulatory domain.

Belongs to the alpha-IPM synthase/homocitrate synthase family. LeuA type 1 subfamily. In terms of assembly, homodimer. Requires Mn(2+) as cofactor.

The protein localises to the cytoplasm. It catalyses the reaction 3-methyl-2-oxobutanoate + acetyl-CoA + H2O = (2S)-2-isopropylmalate + CoA + H(+). The protein operates within amino-acid biosynthesis; L-leucine biosynthesis; L-leucine from 3-methyl-2-oxobutanoate: step 1/4. Functionally, catalyzes the condensation of the acetyl group of acetyl-CoA with 3-methyl-2-oxobutanoate (2-ketoisovalerate) to form 3-carboxy-3-hydroxy-4-methylpentanoate (2-isopropylmalate). In Bradyrhizobium sp. (strain ORS 278), this protein is 2-isopropylmalate synthase.